Consider the following 474-residue polypeptide: 3-isopropylmalate dehydratase large subunit (474 aa).

[4Fe-4S] cluster is bound by residues Cys353, Cys414, and Cys417.

Belongs to the aconitase/IPM isomerase family. LeuC type 1 subfamily. As to quaternary structure, heterodimer of LeuC and LeuD. It depends on [4Fe-4S] cluster as a cofactor.

It carries out the reaction (2R,3S)-3-isopropylmalate = (2S)-2-isopropylmalate. It participates in amino-acid biosynthesis; L-leucine biosynthesis; L-leucine from 3-methyl-2-oxobutanoate: step 2/4. Catalyzes the isomerization between 2-isopropylmalate and 3-isopropylmalate, via the formation of 2-isopropylmaleate. This chain is 3-isopropylmalate dehydratase large subunit, found in Xylella fastidiosa (strain M23).